The primary structure comprises 324 residues: Sperm acrosome membrane-associated protein 6 (324 aa).

Residues 1-26 (MALLALASAVPSALLALAVFRVPAWA) form the signal peptide. Positions 27–30 (CLLC) match the CXXC motif motif. 6 disulfide bridges follow: cysteine 27–cysteine 139, cysteine 30–cysteine 142, cysteine 41–cysteine 55, cysteine 124–cysteine 147, cysteine 128–cysteine 153, and cysteine 170–cysteine 226. The Extracellular portion of the chain corresponds to 27–295 (CLLCFTTYSE…RPEALTPSNL (269 aa)). Positions 139 to 142 (CSGC) match the CXXC motif motif. The 87-residue stretch at 150–236 (PLDCPVQDVT…VIKQDQRPLA (87 aa)) folds into the Ig-like domain. A glycan (N-linked (GlcNAc...) asparagine) is linked at asparagine 243. Residues 296 to 316 (FLLAVLGALASASATVLAWMF) form a helical membrane-spanning segment. Over 317–324 (FRWYCSGN) the chain is Cytoplasmic.

It belongs to the SPACA6 family. Forms a complex with IZUMO1 and TMEM81 on spermatocyte cell membrane required for fertilization. As to expression, detected at the sperm head, equatorial region, neck and midpiece (at protein level). Expressed in testis.

Its subcellular location is the cytoplasmic vesicle. The protein localises to the secretory vesicle. The protein resides in the acrosome membrane. Functionally, sperm protein required for fusion of sperm with the egg membrane during fertilization. May regulate the expression of sperm surface protein DCST2. This is Sperm acrosome membrane-associated protein 6 from Homo sapiens (Human).